The following is a 95-amino-acid chain: Protein RnfH (95 aa).

This sequence belongs to the UPF0125 (RnfH) family.

The sequence is that of Protein RnfH from Erwinia tasmaniensis (strain DSM 17950 / CFBP 7177 / CIP 109463 / NCPPB 4357 / Et1/99).